Reading from the N-terminus, the 546-residue chain is MATLIVLLYGLLAFGTVWLVRRQSKNHDAHRVMRNIPGPPSRSWMKGNIMQYFTRHGRAFQRDVALNYGPVVRLQGPLGRKILYVSDPKALHTIIIKEENVFEEPESTLITFNLLFGDCLVGSLGENHRRQRKLLNPVFSVNHMRHMLPMFYNVIFKLREVVMAKVRGGEKEIDVLEWTGRAALELIGQGGLGYSFDPLVSDKEARNEYGDALKAMLPALMNIESLRQILPHLVKMGPKWFRRLATDIFPNAHVQTVKHVVDTMSKRSQEIFREKKAALKSGDEAVLRQVGEGKDIMSILLRANTAASDADKLPESQMVAQMSLLVFAATDTTSNTLAHILQLLAEHSNVQSKLREELLQSGAGTGNTSYDELMKLPLLDAVCRETLRVHPPATLLVRVPRKDSILPLSEPVIGLDGTIIKDVPVPEGTEIVIGVFGSNVNKSLWGEDALEWKPERWLSPLPRAVNDASIPGVYSNLMTFLGGKRACIGFKFSEMEMKVVLAVMVSNFVFELEKEIEWNVAGVDYPTVVWDGDRPQLPLKVRVYKS.

Positions 1–22 are cleaved as a signal peptide; the sequence is MATLIVLLYGLLAFGTVWLVRR. Asn-367 and Asn-441 each carry an N-linked (GlcNAc...) asparagine glycan. Cys-487 contacts heme.

It belongs to the cytochrome P450 family. The cofactor is heme.

Its pathway is secondary metabolite biosynthesis. Its function is as follows. Cytochrome P450 monooxygenase that is able to use testosterone, anthracene, carbazole, pyrene, phenanthrene and trans-stilbene as substrates for oxidation. These multifunctional properties against a series of polycyclic aromatic hydrocarbons (PAHs) suggest that CYP219 would play important roles, at least in part, in fungal metabolic systems involved in xenobiotic detoxification. The sequence is that of Cytochrome P450 monooxygenase 219 from Postia placenta (strain ATCC 44394 / Madison 698-R) (Brown rot fungus).